The chain runs to 808 residues: Protein translocase subunit SecA 2 (808 aa).

Residues Gln124, 142 to 146 (GEGKT), and Asp535 contribute to the ATP site.

Belongs to the SecA family. As to quaternary structure, monomer and homodimer. Part of the essential Sec protein translocation apparatus which comprises SecA, SecYEG and auxiliary proteins SecDF. Other proteins may also be involved.

It is found in the cell membrane. Its subcellular location is the cytoplasm. It carries out the reaction ATP + H2O + cellular proteinSide 1 = ADP + phosphate + cellular proteinSide 2.. Its function is as follows. Part of the Sec protein translocase complex. Interacts with the SecYEG preprotein conducting channel. Has a central role in coupling the hydrolysis of ATP to the transfer of proteins into and across the cell membrane, serving as an ATP-driven molecular motor driving the stepwise translocation of polypeptide chains across the membrane. The protein is Protein translocase subunit SecA 2 of Mycobacterium bovis (strain BCG / Pasteur 1173P2).